Reading from the N-terminus, the 635-residue chain is Early transcription factor 70 kDa subunit (635 aa).

Residues 32 to 185 (RSIIDENKSV…SNIISLMSDE (154 aa)) form the Helicase ATP-binding domain. 45–52 (HIMGSGKT) lines the ATP pocket. Positions 135-138 (DEAH) match the DEXH box motif. One can recognise a Helicase C-terminal domain in the interval 326 to 505 (KFKYFINKIE…TLPFDIKKLL (180 aa)).

Belongs to the helicase family. VETF subfamily. As to quaternary structure, heterodimer of a 70 kDa and a 82 kDa subunit. Part of the early transcription complex composed of ETF, RAP94, and the DNA-directed RNA polymerase.

Its subcellular location is the virion. Its function is as follows. Acts with RNA polymerase to initiate transcription from early gene promoters. Is recruited by the RPO-associated protein of 94 kDa (RAP94) to form the early transcription complex, which also contains the core RNA polymerase. ETF heterodimer binds to early gene promoters. This is Early transcription factor 70 kDa subunit (VETFS) from Oryctolagus cuniculus (Rabbit).